The primary structure comprises 50 residues: Protein hunchback (50 aa).

3 consecutive C2H2-type zinc fingers follow at residues 1–5, 11–33, and 39–50; these read HILKH, IRCP…MKSH, and YRCLDCNYATKY.

It belongs to the hunchback C2H2-type zinc-finger protein family.

The protein resides in the nucleus. Gap class segmentation protein that controls development of head structures. This chain is Protein hunchback (hb), found in Bradysia coprophila (Dark-winged fungus gnat).